Reading from the N-terminus, the 347-residue chain is Probable replication factor C subunit 3 (347 aa).

It belongs to the activator 1 small subunits family. Heteropentamer of various rfc subunits that forms a complex (RFC) with PCNA in the presence of ATP.

Its subcellular location is the nucleus. Functionally, the elongation of primed DNA templates by DNA polymerase delta and epsilon requires the action of the accessory proteins PCNA and activator 1. The polypeptide is Probable replication factor C subunit 3 (rfc3) (Dictyostelium discoideum (Social amoeba)).